A 291-amino-acid polypeptide reads, in one-letter code: ATP phosphoribosyltransferase (291 aa).

This sequence belongs to the ATP phosphoribosyltransferase family. Long subfamily. Requires Mg(2+) as cofactor.

It localises to the cytoplasm. It carries out the reaction 1-(5-phospho-beta-D-ribosyl)-ATP + diphosphate = 5-phospho-alpha-D-ribose 1-diphosphate + ATP. It functions in the pathway amino-acid biosynthesis; L-histidine biosynthesis; L-histidine from 5-phospho-alpha-D-ribose 1-diphosphate: step 1/9. With respect to regulation, feedback inhibited by histidine. Functionally, catalyzes the condensation of ATP and 5-phosphoribose 1-diphosphate to form N'-(5'-phosphoribosyl)-ATP (PR-ATP). Has a crucial role in the pathway because the rate of histidine biosynthesis seems to be controlled primarily by regulation of HisG enzymatic activity. The polypeptide is ATP phosphoribosyltransferase (Geotalea uraniireducens (strain Rf4) (Geobacter uraniireducens)).